Reading from the N-terminus, the 82-residue chain is ATP synthase subunit c (82 aa).

2 consecutive transmembrane segments (helical) span residues 7–27 and 53–73; these read FVALAAGLIIGLGAIGACIGI and FLLAGLIDAAFLIGVGIAMMF.

The protein belongs to the ATPase C chain family. As to quaternary structure, F-type ATPases have 2 components, F(1) - the catalytic core - and F(0) - the membrane proton channel. F(1) has five subunits: alpha(3), beta(3), gamma(1), delta(1), epsilon(1). F(0) has three main subunits: a(1), b(2) and c(10-14). The alpha and beta chains form an alternating ring which encloses part of the gamma chain. F(1) is attached to F(0) by a central stalk formed by the gamma and epsilon chains, while a peripheral stalk is formed by the delta and b chains.

It is found in the cell inner membrane. Functionally, f(1)F(0) ATP synthase produces ATP from ADP in the presence of a proton or sodium gradient. F-type ATPases consist of two structural domains, F(1) containing the extramembraneous catalytic core and F(0) containing the membrane proton channel, linked together by a central stalk and a peripheral stalk. During catalysis, ATP synthesis in the catalytic domain of F(1) is coupled via a rotary mechanism of the central stalk subunits to proton translocation. Its function is as follows. Key component of the F(0) channel; it plays a direct role in translocation across the membrane. A homomeric c-ring of between 10-14 subunits forms the central stalk rotor element with the F(1) delta and epsilon subunits. In Aromatoleum aromaticum (strain DSM 19018 / LMG 30748 / EbN1) (Azoarcus sp. (strain EbN1)), this protein is ATP synthase subunit c.